The following is a 189-amino-acid chain: Apolipoprotein D (189 aa).

The signal sequence occupies residues 1–20 (MVMLLLLLSALAGLFGAAEG). Gln21 carries the post-translational modification Pyrrolidone carboxylic acid. 2 disulfide bridges follow: Cys28-Cys134 and Cys61-Cys185. Residues Asn65 and Asn98 are each glycosylated (N-linked (GlcNAc...) (complex) asparagine).

The protein belongs to the calycin superfamily. Lipocalin family. As to quaternary structure, homodimer. In plasma, also exists as a disulfide-linked heterodimer with APOA2. Post-translationally, N-glycosylated. N-glycan heterogeneity at Asn-65: Hex5HexNAc4 (major) and Hex6HexNAc5 (minor); at Asn-98: Hex5HexNAc4 (minor), dHex1Hex5HexNAc4 (major), dHex1Hex6HexNAc5 (minor) and dHex1Hex7HexNAc6 (minor). Expressed in liver, intestine, pancreas, kidney, placenta, adrenal, spleen, fetal brain tissue and tears.

The protein resides in the secreted. In terms of biological role, APOD occurs in the macromolecular complex with lecithin-cholesterol acyltransferase. It is probably involved in the transport and binding of bilin. Appears to be able to transport a variety of ligands in a number of different contexts. This chain is Apolipoprotein D (APOD), found in Homo sapiens (Human).